Here is a 251-residue protein sequence, read N- to C-terminus: NADPH-dependent oxidoreductase (251 aa).

It belongs to the flavin oxidoreductase frp family. FMN is required as a cofactor.

Reduces FMN, organic nitro compounds and disulfide DTNB. Involved in maintenance of the cellular redox state and the disulfide stress response. The polypeptide is NADPH-dependent oxidoreductase (nfrA) (Staphylococcus saprophyticus subsp. saprophyticus (strain ATCC 15305 / DSM 20229 / NCIMB 8711 / NCTC 7292 / S-41)).